Here is a 569-residue protein sequence, read N- to C-terminus: Arginine--tRNA ligase (569 aa).

The short motif at 128-138 (ANPTGPLHVGH) is the 'HIGH' region element.

This sequence belongs to the class-I aminoacyl-tRNA synthetase family. Monomer.

It is found in the cytoplasm. It catalyses the reaction tRNA(Arg) + L-arginine + ATP = L-arginyl-tRNA(Arg) + AMP + diphosphate. This Paracidovorax citrulli (strain AAC00-1) (Acidovorax citrulli) protein is Arginine--tRNA ligase.